The chain runs to 158 residues: NAD(P)H-quinone oxidoreductase subunit J, chloroplastic (158 aa).

The protein belongs to the complex I 30 kDa subunit family. In terms of assembly, NDH is composed of at least 16 different subunits, 5 of which are encoded in the nucleus.

Its subcellular location is the plastid. It localises to the chloroplast thylakoid membrane. The catalysed reaction is a plastoquinone + NADH + (n+1) H(+)(in) = a plastoquinol + NAD(+) + n H(+)(out). The enzyme catalyses a plastoquinone + NADPH + (n+1) H(+)(in) = a plastoquinol + NADP(+) + n H(+)(out). Its function is as follows. NDH shuttles electrons from NAD(P)H:plastoquinone, via FMN and iron-sulfur (Fe-S) centers, to quinones in the photosynthetic chain and possibly in a chloroplast respiratory chain. The immediate electron acceptor for the enzyme in this species is believed to be plastoquinone. Couples the redox reaction to proton translocation, and thus conserves the redox energy in a proton gradient. The sequence is that of NAD(P)H-quinone oxidoreductase subunit J, chloroplastic from Draba nemorosa (Woodland whitlowgrass).